We begin with the raw amino-acid sequence, 394 residues long: 1-deoxy-D-xylulose 5-phosphate reductoisomerase (394 aa).

Residues T10, G11, S12, I13, G38, R39, N40, and N123 each contribute to the NADPH site. K124 serves as a coordination point for 1-deoxy-D-xylulose 5-phosphate. E125 contributes to the NADPH binding site. D149 contributes to the Mn(2+) binding site. S150, E151, S175, and H198 together coordinate 1-deoxy-D-xylulose 5-phosphate. Mn(2+) is bound at residue E151. Residue G204 participates in NADPH binding. 1-deoxy-D-xylulose 5-phosphate is bound by residues S211, N216, K217, and E220. E220 contributes to the Mn(2+) binding site.

This sequence belongs to the DXR family. Mg(2+) is required as a cofactor. It depends on Mn(2+) as a cofactor.

It carries out the reaction 2-C-methyl-D-erythritol 4-phosphate + NADP(+) = 1-deoxy-D-xylulose 5-phosphate + NADPH + H(+). It participates in isoprenoid biosynthesis; isopentenyl diphosphate biosynthesis via DXP pathway; isopentenyl diphosphate from 1-deoxy-D-xylulose 5-phosphate: step 1/6. In terms of biological role, catalyzes the NADPH-dependent rearrangement and reduction of 1-deoxy-D-xylulose-5-phosphate (DXP) to 2-C-methyl-D-erythritol 4-phosphate (MEP). This is 1-deoxy-D-xylulose 5-phosphate reductoisomerase from Cereibacter sphaeroides (strain KD131 / KCTC 12085) (Rhodobacter sphaeroides).